Here is a 465-residue protein sequence, read N- to C-terminus: Probable Xaa-Pro aminopeptidase pepP (465 aa).

Positions 263, 274, 397, and 437 each coordinate Mn(2+).

Belongs to the peptidase M24B family. It depends on Mn(2+) as a cofactor.

It catalyses the reaction Release of any N-terminal amino acid, including proline, that is linked to proline, even from a dipeptide or tripeptide.. Catalyzes the removal of a penultimate prolyl residue from the N-termini of peptides. The chain is Probable Xaa-Pro aminopeptidase pepP (pepP) from Penicillium rubens (strain ATCC 28089 / DSM 1075 / NRRL 1951 / Wisconsin 54-1255) (Penicillium chrysogenum).